The sequence spans 785 residues: E3 UFM1-protein ligase 1 homolog (785 aa).

The span at 396–416 (MKHQDVIPDKESAENKADKRD) shows a compositional bias: basic and acidic residues. Residues 396–473 (MKHQDVIPDK…KSAGGKKGAK (78 aa)) form a disordered region. Positions 439–449 (KSTKKHARGHR) are enriched in basic residues.

Belongs to the UFL1 family.

Functionally, E3 UFM1-protein ligase that mediates ufmylation of target proteins. The chain is E3 UFM1-protein ligase 1 homolog from Culex quinquefasciatus (Southern house mosquito).